The sequence spans 791 residues: Valine--tRNA ligase (791 aa).

The 'HIGH' region motif lies at 40–50 (PTVSGKMHMGH). The 'KMSKS' region motif lies at 521-525 (KMSKS). Lys524 contacts ATP.

It belongs to the class-I aminoacyl-tRNA synthetase family. ValS type 2 subfamily.

The protein resides in the cytoplasm. It catalyses the reaction tRNA(Val) + L-valine + ATP = L-valyl-tRNA(Val) + AMP + diphosphate. Functionally, catalyzes the attachment of valine to tRNA(Val). As ValRS can inadvertently accommodate and process structurally similar amino acids such as threonine, to avoid such errors, it has a 'posttransfer' editing activity that hydrolyzes mischarged Thr-tRNA(Val) in a tRNA-dependent manner. This Thermoplasma acidophilum (strain ATCC 25905 / DSM 1728 / JCM 9062 / NBRC 15155 / AMRC-C165) protein is Valine--tRNA ligase.